The sequence spans 544 residues: CTP synthase (544 aa).

Positions methionine 1–leucine 265 are amidoligase domain. Serine 13 provides a ligand contact to CTP. Residue serine 13 participates in UTP binding. Residues serine 14 to isoleucine 19 and aspartate 71 contribute to the ATP site. Positions 71 and 139 each coordinate Mg(2+). CTP-binding positions include aspartate 146–glutamate 148, lysine 186–glutamine 191, and lysine 222. UTP-binding positions include lysine 186–glutamine 191 and lysine 222. In terms of domain architecture, Glutamine amidotransferase type-1 spans threonine 290–glutamate 541. Glycine 351 provides a ligand contact to L-glutamine. The active-site Nucleophile; for glutamine hydrolysis is cysteine 378. L-glutamine is bound by residues leucine 379–glutamine 382, glutamate 402, and arginine 469. Catalysis depends on residues histidine 514 and glutamate 516.

The protein belongs to the CTP synthase family. In terms of assembly, homotetramer.

It catalyses the reaction UTP + L-glutamine + ATP + H2O = CTP + L-glutamate + ADP + phosphate + 2 H(+). It carries out the reaction L-glutamine + H2O = L-glutamate + NH4(+). The enzyme catalyses UTP + NH4(+) + ATP = CTP + ADP + phosphate + 2 H(+). It functions in the pathway pyrimidine metabolism; CTP biosynthesis via de novo pathway; CTP from UDP: step 2/2. Allosterically activated by GTP, when glutamine is the substrate; GTP has no effect on the reaction when ammonia is the substrate. The allosteric effector GTP functions by stabilizing the protein conformation that binds the tetrahedral intermediate(s) formed during glutamine hydrolysis. Inhibited by the product CTP, via allosteric rather than competitive inhibition. Its function is as follows. Catalyzes the ATP-dependent amination of UTP to CTP with either L-glutamine or ammonia as the source of nitrogen. Regulates intracellular CTP levels through interactions with the four ribonucleotide triphosphates. This chain is CTP synthase, found in Dichelobacter nodosus (strain VCS1703A).